We begin with the raw amino-acid sequence, 534 residues long: Beta-glucosidase 32 (534 aa).

A signal peptide spans 1 to 22; the sequence is MAIKLIALVITICVASWDSAQG. Gln-51 contacts a beta-D-glucoside. Residue Asn-68 is glycosylated (N-linked (GlcNAc...) asparagine). A beta-D-glucoside-binding positions include His-154 and 199-200; that span reads NE. Glu-200 serves as the catalytic Proton donor. Residues Cys-219 and Cys-227 are joined by a disulfide bond. Position 344 (Tyr-344) interacts with a beta-D-glucoside. The N-linked (GlcNAc...) asparagine glycan is linked to Asn-374. Glu-417 contributes to the a beta-D-glucoside binding site. Glu-417 acts as the Nucleophile in catalysis. The N-linked (GlcNAc...) asparagine glycan is linked to Asn-425. Residues Trp-467, 474 to 475, and Phe-483 contribute to the a beta-D-glucoside site; that span reads EW.

It belongs to the glycosyl hydrolase 1 family.

It carries out the reaction Hydrolysis of terminal, non-reducing beta-D-glucosyl residues with release of beta-D-glucose.. This chain is Beta-glucosidase 32, found in Arabidopsis thaliana (Mouse-ear cress).